The following is a 42-amino-acid chain: Packaging protein P20 (42 aa).

Residues 11–31 (INWLIVILMLTIAGMAATLVC) form a helical membrane-spanning segment.

As to quaternary structure, heterodimer of P20 and P22; further multimerizes as hexamers of heterodimers. Part of the dodecameric portal complex that is composed of the packaging efficiency factor P6, the DNA packaging ATPase P9, and the internal heterododecamer P20/P22 which spans the virion inner membrane.

The protein localises to the virion membrane. Functionally, together with P22, forms the internal part of the portal complex embeded in the virion internal membrane and which plays critical roles in genome packaging and genome ejection. Both proteins multimerize as a single ring-shaped heterdodecamer arranged around a central channel and interact with the P6/P9 external part of the portal. The chain is Packaging protein P20 (XX) from Acinetobacter calcoaceticus (Arthrobacter siderocapsulatus).